Consider the following 404-residue polypeptide: Probable tRNA sulfurtransferase (404 aa).

In terms of domain architecture, THUMP spans 60–165 (QPVAESLKQI…EEAAYISYET (106 aa)). ATP contacts are provided by residues 183-184 (ML), 208-209 (HF), Arg265, Gly287, and Gln296.

Belongs to the ThiI family.

The protein localises to the cytoplasm. The enzyme catalyses [ThiI sulfur-carrier protein]-S-sulfanyl-L-cysteine + a uridine in tRNA + 2 reduced [2Fe-2S]-[ferredoxin] + ATP + H(+) = [ThiI sulfur-carrier protein]-L-cysteine + a 4-thiouridine in tRNA + 2 oxidized [2Fe-2S]-[ferredoxin] + AMP + diphosphate. It catalyses the reaction [ThiS sulfur-carrier protein]-C-terminal Gly-Gly-AMP + S-sulfanyl-L-cysteinyl-[cysteine desulfurase] + AH2 = [ThiS sulfur-carrier protein]-C-terminal-Gly-aminoethanethioate + L-cysteinyl-[cysteine desulfurase] + A + AMP + 2 H(+). The protein operates within cofactor biosynthesis; thiamine diphosphate biosynthesis. In terms of biological role, catalyzes the ATP-dependent transfer of a sulfur to tRNA to produce 4-thiouridine in position 8 of tRNAs, which functions as a near-UV photosensor. Also catalyzes the transfer of sulfur to the sulfur carrier protein ThiS, forming ThiS-thiocarboxylate. This is a step in the synthesis of thiazole, in the thiamine biosynthesis pathway. The sulfur is donated as persulfide by IscS. This chain is Probable tRNA sulfurtransferase, found in Streptococcus gordonii (strain Challis / ATCC 35105 / BCRC 15272 / CH1 / DL1 / V288).